We begin with the raw amino-acid sequence, 102 residues long: MTENIDTANIDSMKHKTLKRTANRANKEVFFRRRKGCPLSAPDGTAPIITYKDPDLLSKFISECGRVLPARVTNVCRSKQRELTKAIKIARELALLPFVYHQ.

This sequence belongs to the bacterial ribosomal protein bS18 family. In terms of assembly, part of the 30S ribosomal subunit. Forms a tight heterodimer with protein bS6.

Its function is as follows. Binds as a heterodimer with protein bS6 to the central domain of the 16S rRNA, where it helps stabilize the platform of the 30S subunit. This chain is Small ribosomal subunit protein bS18, found in Orientia tsutsugamushi (strain Ikeda) (Rickettsia tsutsugamushi).